The sequence spans 383 residues: Heme A synthase (383 aa).

Helical transmembrane passes span 38-58, 127-147, 153-173, 187-207, 230-250, 287-307, 321-341, and 344-364; these read VRVW…VGGL, VIGL…KIPP, LFLL…MVAS, LATH…YIMV, ANWL…VAGI, LVQF…LYVW, AFDW…VTVL, and APWT…CLIL. Histidine 292 contacts heme. Histidine 352 is a binding site for heme.

This sequence belongs to the COX15/CtaA family. Type 2 subfamily. In terms of assembly, interacts with CtaB. It depends on heme b as a cofactor.

It localises to the cell membrane. It catalyses the reaction Fe(II)-heme o + 2 A + H2O = Fe(II)-heme a + 2 AH2. It participates in porphyrin-containing compound metabolism; heme A biosynthesis; heme A from heme O: step 1/1. Catalyzes the conversion of heme O to heme A by two successive hydroxylations of the methyl group at C8. The first hydroxylation forms heme I, the second hydroxylation results in an unstable dihydroxymethyl group, which spontaneously dehydrates, resulting in the formyl group of heme A. This chain is Heme A synthase, found in Dinoroseobacter shibae (strain DSM 16493 / NCIMB 14021 / DFL 12).